A 362-amino-acid chain; its full sequence is Large ribosomal subunit protein uL2m (362 aa).

A mitochondrion-targeting transit peptide spans 1–23 (MLSYNRFRGYLIPQIHALKLFRY). The tract at residues 306–362 (AMNPCDHPHGGGGGKSIGNKPSQSPWGVLAKGGYKTRRGKNVNKLLVRDRPRGKEKR) is disordered. Over residues 351 to 362 (LVRDRPRGKEKR) the composition is skewed to basic and acidic residues.

This sequence belongs to the universal ribosomal protein uL2 family. In terms of assembly, component of the mitochondrial large ribosomal subunit (mt-LSU). Mature yeast 74S mitochondrial ribosomes consist of a small (37S) and a large (54S) subunit. The 37S small subunit contains a 15S ribosomal RNA (15S mt-rRNA) and at least 32 different proteins. The 54S large subunit contains a 21S rRNA (21S mt-rRNA) and at least 45 different proteins. uL2m has a Na/K ligand binding site.

It localises to the mitochondrion. Functionally, component of the mitochondrial ribosome (mitoribosome), a dedicated translation machinery responsible for the synthesis of mitochondrial genome-encoded proteins, including at least some of the essential transmembrane subunits of the mitochondrial respiratory chain. The mitoribosomes are attached to the mitochondrial inner membrane and translation products are cotranslationally integrated into the membrane. The polypeptide is Large ribosomal subunit protein uL2m (rml2) (Schizosaccharomyces pombe (strain 972 / ATCC 24843) (Fission yeast)).